We begin with the raw amino-acid sequence, 356 residues long: Fructose-1,6-bisphosphatase class 1 (356 aa).

Mg(2+)-binding residues include Glu-91, Asp-113, Leu-115, and Asp-116. Substrate contacts are provided by residues 116–119 (DGSS) and Asn-208. Residue Glu-280 coordinates Mg(2+).

It belongs to the FBPase class 1 family. Homotetramer. Mg(2+) is required as a cofactor.

It localises to the cytoplasm. The enzyme catalyses beta-D-fructose 1,6-bisphosphate + H2O = beta-D-fructose 6-phosphate + phosphate. It functions in the pathway carbohydrate biosynthesis; gluconeogenesis. This Methylacidiphilum infernorum (isolate V4) (Methylokorus infernorum (strain V4)) protein is Fructose-1,6-bisphosphatase class 1.